A 265-amino-acid polypeptide reads, in one-letter code: Glutamate racemase (265 aa).

Residues 7–8 and 39–40 each bind substrate; these read DS and YG. Catalysis depends on C71, which acts as the Proton donor/acceptor. 72–73 contributes to the substrate binding site; the sequence is NT. The active-site Proton donor/acceptor is the C184. 185 to 186 is a substrate binding site; sequence TH.

This sequence belongs to the aspartate/glutamate racemases family.

The catalysed reaction is L-glutamate = D-glutamate. It functions in the pathway cell wall biogenesis; peptidoglycan biosynthesis. Its function is as follows. Provides the (R)-glutamate required for cell wall biosynthesis. This chain is Glutamate racemase, found in Sulfurovum sp. (strain NBC37-1).